We begin with the raw amino-acid sequence, 151 residues long: Protein ripply1 (151 aa).

The WRPW motif signature appears at tryptophan 57 to tryptophan 60. Residues histidine 96 to tyrosine 131 are ripply homology domain. Residues leucine 130 to lysine 151 are disordered. The segment covering glutamate 132–lysine 151 has biased composition (acidic residues).

The protein belongs to the ripply family.

The protein resides in the nucleus. In terms of biological role, plays a role in somitogenesis. Essential for transcriptional repression of the segmental patterning genes, thus terminating the segmentation program in the presomitic mesoderm, and also required for the maintenance of rostrocaudal polarity in somites. The polypeptide is Protein ripply1 (Homo sapiens (Human)).